We begin with the raw amino-acid sequence, 402 residues long: Phosphoglycerate kinase (402 aa).

Substrate contacts are provided by residues aspartate 24–asparagine 26, arginine 40, histidine 63–arginine 66, arginine 122, and arginine 155. ATP is bound by residues lysine 206, glycine 297, glutamate 328, and glycine 357–serine 360.

The protein belongs to the phosphoglycerate kinase family. As to quaternary structure, monomer.

It is found in the cytoplasm. It carries out the reaction (2R)-3-phosphoglycerate + ATP = (2R)-3-phospho-glyceroyl phosphate + ADP. It participates in carbohydrate degradation; glycolysis; pyruvate from D-glyceraldehyde 3-phosphate: step 2/5. This chain is Phosphoglycerate kinase, found in Prochlorococcus marinus (strain MIT 9211).